Here is a 63-residue protein sequence, read N- to C-terminus: Potassium channel toxin Sp4 (63 aa).

Residues 1-20 form the signal peptide; the sequence is MNKVHFALFLLVLTVLAVSG. 3 cysteine pairs are disulfide-bonded: C31-C53, C38-C58, and C42-C60.

Belongs to the long chain scorpion toxin family. Class 2 subfamily. In terms of tissue distribution, expressed by the venom gland.

It localises to the secreted. This recombinant toxin selectively inhibits mouse voltage-gated potassium channel Kv1.3/KCNA3 (IC(50)=24.73 nM). This chain is Potassium channel toxin Sp4, found in Scorpiops pococki (Scorpion).